A 92-amino-acid chain; its full sequence is RNA-binding protein Hfq (92 aa).

Residues 9 to 68 (DPFLNALRRERVPVSVYLVNGIKLQGTIESFDQFVVLLRNTVSQMVYKHAISTVVPARNV) form the Sm domain. The segment at 72–92 (PGGGYVQSNENNQAEDDDVEQ) is disordered.

The protein belongs to the Hfq family. As to quaternary structure, homohexamer.

In terms of biological role, RNA chaperone that binds small regulatory RNA (sRNAs) and mRNAs to facilitate mRNA translational regulation in response to envelope stress, environmental stress and changes in metabolite concentrations. Also binds with high specificity to tRNAs. The polypeptide is RNA-binding protein Hfq (Xanthomonas campestris pv. campestris (strain 8004)).